We begin with the raw amino-acid sequence, 345 residues long: IGF-like family receptor 1 (345 aa).

Residues 1-20 (MGPSWLLWTVAVAVLLLTRA) form the signal peptide. Residues 21–163 (ASMEASSFCG…SSRPGFVSAS (143 aa)) lie on the Extracellular side of the membrane. An N-linked (GlcNAc...) asparagine glycan is attached at Asn87. The segment at 106-149 (VESPGRTHKQCRKKPVPPKDVCPLKPEDAGASSSPGRWSLGQTT) is disordered. Positions 111–121 (RTHKQCRKKPV) are enriched in basic residues. Residues 136–149 (ASSSPGRWSLGQTT) show a composition bias toward polar residues. Residues 164–184 (VLPLAVLPLLLVLLLILAVVL) traverse the membrane as a helical segment. Topologically, residues 185–345 (LSLFKRKVRS…DALQVLSKLG (161 aa)) are cytoplasmic.

As to expression, ubiquitously expressed with higher expression in lymph node. Highly expressed in T-cells and monocytes.

Its subcellular location is the cell membrane. Functionally, probable cell membrane receptor for the IGF-like family protein IGFL. The chain is IGF-like family receptor 1 (Igflr1) from Mus musculus (Mouse).